Reading from the N-terminus, the 603-residue chain is MPRFITELKRTHSCGELTKADIGKEVVLFGWVNNRRDHGGAVFIDLRDRAGLTQVVFEEDVRPDVHELAGQLRLEYCVGVRGKVVSRGGNVNPKLPTGEIEVHASDLEIFNRSEPAPFQIEDKIDTGEEKRLQYRYLDLRRAPLQQTLMTRAKVNHLTRNYFTDKGFLELETPFMVKYTPGGARNFLVPSRLNPGKFYALAESPQLFKQLYMMAGFDRYFQIVRCFRDEDLRLDRQPEFTQIDVEMSFVEQNDVFDVMEGLVVKLWKEVLGIEIPRPFQRMPFEESMAKYGNDKPDLRFDMPHVVLTDLVRQHDGGGVPLMHEAVKAKGIVKAMRVPASANFSRTEIDKLEEYVKGMGAKGLARAKVGEGGEWTQSPLAKTITPALRQAINDACEAKAGDLLLFQFGKESVVHTVMANLRVHLAKRMGLIPEYGSGGAWRFLWVVNPPLFEYDEESGQWAAAHHAFTRPHDSDLQFLESDPGKVNCYRYDLVLNGFEIGGGSIRLHDPEVQARVFKAMGISDEEARSKFGFLLDALKMGAPPHGGIALGMDRLVMLLTGAESLRDVVAWPKTQKGTDLMTGAPGDVDARQLRELYVKSTFEPK.

The aspartate stretch occupies residues 205-208 (QLFK). Arginine 227 provides a ligand contact to L-aspartate. Residues 227–229 (RDE) and glutamine 236 each bind ATP. An L-aspartate-binding site is contributed by histidine 463. Glutamate 497 lines the ATP pocket. Residue arginine 504 participates in L-aspartate binding. 549–552 (GMDR) lines the ATP pocket.

It belongs to the class-II aminoacyl-tRNA synthetase family. Type 1 subfamily. In terms of assembly, homodimer.

Its subcellular location is the cytoplasm. It catalyses the reaction tRNA(Asx) + L-aspartate + ATP = L-aspartyl-tRNA(Asx) + AMP + diphosphate. Functionally, aspartyl-tRNA synthetase with relaxed tRNA specificity since it is able to aspartylate not only its cognate tRNA(Asp) but also tRNA(Asn). Reaction proceeds in two steps: L-aspartate is first activated by ATP to form Asp-AMP and then transferred to the acceptor end of tRNA(Asp/Asn). The protein is Aspartate--tRNA(Asp/Asn) ligase of Anaeromyxobacter dehalogenans (strain 2CP-C).